A 388-amino-acid polypeptide reads, in one-letter code: Chorismate synthase (388 aa).

Residues arginine 39 and arginine 45 each contribute to the NADP(+) site. Residues 95-118 (EKNEKSRRVSRPRPGHADLVGGMK) are disordered. FMN is bound by residues 130–132 (RSS), 251–252 (NA), glycine 296, 311–315 (KPIPT), and arginine 337.

The protein belongs to the chorismate synthase family. As to quaternary structure, homotetramer. The cofactor is FMNH2.

It catalyses the reaction 5-O-(1-carboxyvinyl)-3-phosphoshikimate = chorismate + phosphate. Its pathway is metabolic intermediate biosynthesis; chorismate biosynthesis; chorismate from D-erythrose 4-phosphate and phosphoenolpyruvate: step 7/7. Catalyzes the anti-1,4-elimination of the C-3 phosphate and the C-6 proR hydrogen from 5-enolpyruvylshikimate-3-phosphate (EPSP) to yield chorismate, which is the branch point compound that serves as the starting substrate for the three terminal pathways of aromatic amino acid biosynthesis. This reaction introduces a second double bond into the aromatic ring system. The chain is Chorismate synthase from Listeria monocytogenes serovar 1/2a (strain ATCC BAA-679 / EGD-e).